A 566-amino-acid chain; its full sequence is Arginine--tRNA ligase (566 aa).

The 'HIGH' region signature appears at 123-133 (PNIAKPFHIGH).

It belongs to the class-I aminoacyl-tRNA synthetase family. In terms of assembly, monomer.

The protein localises to the cytoplasm. The enzyme catalyses tRNA(Arg) + L-arginine + ATP = L-arginyl-tRNA(Arg) + AMP + diphosphate. The chain is Arginine--tRNA ligase from Halothermothrix orenii (strain H 168 / OCM 544 / DSM 9562).